The chain runs to 215 residues: Large ribosomal subunit protein uL4c (215 aa).

A disordered region spans residues 51-87 (QKQGTVSTKTRSEVRGGGKKPWRQKGTGRARAGSSRS). Positions 67–78 (GGKKPWRQKGTG) are enriched in basic residues.

Belongs to the universal ribosomal protein uL4 family. Part of the 50S ribosomal subunit.

The protein resides in the plastid. It is found in the chloroplast. Its function is as follows. Probably binds the 23S rRNA. This Thalassiosira pseudonana (Marine diatom) protein is Large ribosomal subunit protein uL4c (rpl4).